Reading from the N-terminus, the 159-residue chain is CASP-like protein 5C1 (159 aa).

The Cytoplasmic segment spans residues 1-6 (MDNGDR). A helical membrane pass occupies residues 7–29 (SGAGAGAVGSAGSLGLRVGQAVF). Topologically, residues 30–48 (SSASLLFMSVGVEFFSYTA) are extracellular. Residues 49-69 (FCFLVTIMGLVIPWSCTLAMI) traverse the membrane as a helical segment. Topologically, residues 70 to 94 (DVYSVFVGCPLRVPGVMVIVVVGDC) are cytoplasmic. Residues 95 to 117 (ALSIVSFAAACSSAAVIDLLLQL) form a helical membrane-spanning segment. At 118–134 (HGSHSSPTFCGRYQLSA) the chain is on the extracellular side. The helical transmembrane segment at 135 to 155 (MMAFLSWLLMAASATFNLWFV) threads the bilayer. Residues 156 to 159 (ASRW) are Cytoplasmic-facing.

The protein belongs to the Casparian strip membrane proteins (CASP) family. As to quaternary structure, homodimer and heterodimers.

The protein resides in the cell membrane. In Zea mays (Maize), this protein is CASP-like protein 5C1.